The sequence spans 87 residues: Small ribosomal subunit protein uS15c (87 aa).

This sequence belongs to the universal ribosomal protein uS15 family. In terms of assembly, part of the 30S ribosomal subunit.

Its subcellular location is the plastid. It is found in the chloroplast. This Oenothera argillicola (Appalachian evening primrose) protein is Small ribosomal subunit protein uS15c (rps15).